The chain runs to 368 residues: uncharacterized protein (368 aa).

It belongs to the CdaR family.

This is an uncharacterized protein from Haemophilus influenzae (strain ATCC 51907 / DSM 11121 / KW20 / Rd).